The sequence spans 422 residues: Putative serpin-Z8 (422 aa).

The interval 369-393 (GTVAAAATMTRMLPSGVPPPPVDFV) is RCL.

The protein belongs to the serpin family.

Probable serine protease inhibitor. The sequence is that of Putative serpin-Z8 from Oryza sativa subsp. japonica (Rice).